A 132-amino-acid chain; its full sequence is MSMTDPIADLLVRIKNAAAVGKQTVKLPSSKIKVAIAQVLKDEGYITDLRVTQAENNKAELEIVLKYFEGRPVIETLKRFSRSGLRQYRGKTELPKVLGGLGIAIISTSKGIMTDAQAREAGVGGEVLCFVA.

Belongs to the universal ribosomal protein uS8 family. As to quaternary structure, part of the 30S ribosomal subunit. Contacts proteins S5 and S12.

Its function is as follows. One of the primary rRNA binding proteins, it binds directly to 16S rRNA central domain where it helps coordinate assembly of the platform of the 30S subunit. The chain is Small ribosomal subunit protein uS8 from Xanthomonas axonopodis pv. citri (strain 306).